A 365-amino-acid chain; its full sequence is 5-hydroxytryptamine receptor 1E (365 aa).

The Extracellular segment spans residues 1–22; the sequence is MNITNCTTDASMVVRPKTVTEK. Residues Asn2 and Asn5 are each glycosylated (N-linked (GlcNAc...) asparagine). Residues 23–47 traverse the membrane as a helical segment; the sequence is MLICMTLVIITTLTMLLNSAVIMAI. The Cytoplasmic segment spans residues 48-59; sequence CTTKKLHQPANY. The chain crosses the membrane as a helical span at residues 60 to 82; it reads LICSLAVTDLLVAVLVMPLSIMY. Topologically, residues 83-96 are extracellular; the sequence is IVMDSWRLGYFICE. A disulfide bond links Cys95 and Cys173. The helical transmembrane segment at 97–118 threads the bilayer; it reads VWLSVDMTCCTCSILHLCVIAL. 2 residues coordinate ergotamine: Asp102 and Thr107. The DRY motif; important for ligand-induced conformation changes motif lies at 119–121; that stretch reads DRY. Residues 119 to 138 are Cytoplasmic-facing; that stretch reads DRYWAITNAIEYARKRTAKR. A helical membrane pass occupies residues 139–160; sequence AGLMILTVWTISIFISMPPLFW. Residues 161 to 179 lie on the Extracellular side of the membrane; the sequence is RSHRQLSPPPSQCTIQHDH. Ile175 serves as a coordination point for ergotamine. The chain crosses the membrane as a helical span at residues 180–202; the sequence is VIYTIYSTFGAFYIPLTLILILY. Topologically, residues 203-291 are cytoplasmic; it reads YRIYHAAKSL…SSTRERKAAR (89 aa). Residues 292–314 form a helical membrane-spanning segment; the sequence is ILGLILGAFILSWLPFFIKELIV. Residues 315 to 324 are Extracellular-facing; sequence GLSIYTVSSE. A helical membrane pass occupies residues 325–347; sequence VGDFLTWLGYVNSLINPLLYTSF. Residues 340 to 344 carry the NPxxY motif; important for ligand-induced conformation changes and signaling motif; the sequence is NPLLY. The Cytoplasmic segment spans residues 348 to 365; that stretch reads NEDFKLAFKKLIRCREHT.

This sequence belongs to the G-protein coupled receptor 1 family. Detected in the brain with the greatest abundance in the hippocampus, followed by the olfactory bulb. Lower levels are detected in the cortex, thalamus, pons, hypothalamus, midbrain, striatum, and cerebellum.

The protein resides in the cell membrane. G-protein coupled receptor for 5-hydroxytryptamine (serotonin). Also functions as a receptor for various alkaloids and psychoactive substances. Ligand binding causes a conformation change that triggers signaling via guanine nucleotide-binding proteins (G proteins) and modulates the activity of down-stream effectors, such as adenylate cyclase. Signaling inhibits adenylate cyclase activity. In Cavia porcellus (Guinea pig), this protein is 5-hydroxytryptamine receptor 1E (5HT1E).